A 116-amino-acid chain; its full sequence is MPLTPPPNPQKTYQIAILALGLVLLAFVLISDHSPKVGDHLHNLPFGGEYKDGTKSIKYFQRPNQHSLSKTLAKSHNTTIFLLILGLIVTLHGLHYFNNNRRVSSSLHCVLCQNKH.

At 1 to 11 (MPLTPPPNPQK) the chain is on the cytoplasmic side. Residues 12–32 (TYQIAILALGLVLLAFVLISD) form a helical membrane-spanning segment. Residues 33–77 (HSPKVGDHLHNLPFGGEYKDGTKSIKYFQRPNQHSLSKTLAKSHN) lie on the Lumenal side of the membrane. Residues 78 to 98 (TTIFLLILGLIVTLHGLHYFN) form a helical membrane-spanning segment. Topologically, residues 99–116 (NNRRVSSSLHCVLCQNKH) are cytoplasmic.

This sequence belongs to the Tymovirales TGBp2 protein family.

It is found in the host endoplasmic reticulum membrane. Plays a role in viral cell-to-cell propagation, by facilitating genome transport to neighboring plant cells through plasmosdesmata,. The sequence is that of Movement protein TGB2 from White clover mosaic virus (strain M) (WCMV).